The chain runs to 468 residues: 6-phosphogluconate dehydrogenase, decarboxylating (468 aa).

NADP(+)-binding positions include 9–14 (GLAVMG), 32–34 (NRS), 73–75 (VQA), and Asn101. Substrate-binding positions include Asn101 and 127 to 129 (SGG). Lys182 functions as the Proton acceptor in the catalytic mechanism. 185-186 (HN) serves as a coordination point for substrate. The active-site Proton donor is Glu189. Residues Tyr190, Lys259, Arg286, Arg444, and His450 each contribute to the substrate site.

The protein belongs to the 6-phosphogluconate dehydrogenase family. In terms of assembly, homodimer.

It carries out the reaction 6-phospho-D-gluconate + NADP(+) = D-ribulose 5-phosphate + CO2 + NADPH. It participates in carbohydrate degradation; pentose phosphate pathway; D-ribulose 5-phosphate from D-glucose 6-phosphate (oxidative stage): step 3/3. In terms of biological role, catalyzes the oxidative decarboxylation of 6-phosphogluconate to ribulose 5-phosphate and CO(2), with concomitant reduction of NADP to NADPH. The protein is 6-phosphogluconate dehydrogenase, decarboxylating (gnd) of Staphylococcus aureus (strain Mu50 / ATCC 700699).